The following is a 398-amino-acid chain: UPF0496 protein At5g66660 (398 aa).

2 consecutive transmembrane segments (helical) span residues 240-260 (VFFA…TTMS) and 263-283 (PVVC…GKWF).

The protein belongs to the UPF0496 family.

It localises to the membrane. The sequence is that of UPF0496 protein At5g66660 from Arabidopsis thaliana (Mouse-ear cress).